We begin with the raw amino-acid sequence, 635 residues long: Sodium- and chloride-dependent creatine transporter 1 (635 aa).

The tract at residues 1–28 (MAKKSAENGIYSVSGDEKKGPLIAPGPD) is disordered. Residues 1 to 60 (MAKKSAENGIYSVSGDEKKGPLIAPGPDGAPAKGDGPVGLGTPGGRLAVPPRETWTRQMD) lie on the Cytoplasmic side of the membrane. Thr42 bears the Phosphothreonine mark. Residues 61–81 (FIMSCVGFAVGLGNVWRFPYL) traverse the membrane as a helical segment. Over 82-87 (CYKNGG) the chain is Extracellular. The chain crosses the membrane as a helical span at residues 88-108 (GVFLIPYVLIALVGGIPIFFL). Residues 109–138 (EISLGQFMKAGSINVWNICPLFKGLGYASM) are Cytoplasmic-facing. The helical transmembrane segment at 139-159 (VIVFYCNTYYIMVLAWGFYYL) threads the bilayer. Topologically, residues 160-230 (VKSFTTTLPW…LSGGLEVPGA (71 aa)) are extracellular. Asn192 and Asn197 each carry an N-linked (GlcNAc...) asparagine glycan. Residues 231 to 251 (LNWEVTLCLLACWVLVYFCVW) form a helical membrane-spanning segment. The Cytoplasmic portion of the chain corresponds to 252–269 (KGVKSTGKIVYFTATFPY). A helical membrane pass occupies residues 270 to 290 (VVLVVLLVRGVLLPGALDGII). Residues 291-304 (YYLKPDWSKLGSPQ) are Extracellular-facing. The helical transmembrane segment at 305-325 (VWIDAGTQIFFSYAIGLGALT) threads the bilayer. At 326 to 341 (ALGSYNRFNNNCYKDA) the chain is on the cytoplasmic side. A helical membrane pass occupies residues 342–362 (IILALINSGTSFFAGFVVFSI). Residues 363 to 394 (LGFMAAEQGVHISKVAESGPGLAFIAYPRAVT) are Extracellular-facing. Residues 395 to 415 (LMPVAPLWAALFFFMLLLLGL) form a helical membrane-spanning segment. Residues 416–444 (DSQFVGVEGFITGLLDLLPASYYFRFQRE) lie on the Cytoplasmic side of the membrane. Residues 445–465 (ISVALCCALCFVIDLSMVTDG) form a helical membrane-spanning segment. Topologically, residues 466–479 (GMYVFQLFDYYSAS) are extracellular. The chain crosses the membrane as a helical span at residues 480–500 (GTTLLWQAFWECVVVAWVYGA). Over 501–520 (DRFMDDIACMIGYRPCPWMK) the chain is Cytoplasmic. Residues 521–541 (WCWSFFTPLVCMGIFIFNVVY) form a helical membrane-spanning segment. Residues 542-560 (YEPLVYNNTYVYPWWGEAM) are Extracellular-facing. A glycan (N-linked (GlcNAc...) asparagine) is linked at Asn548. The helical transmembrane segment at 561-581 (GWAFALSSMLCVPLHLLGCLL) threads the bilayer. At 582-635 (RAKGTMAERWQHLTQPIWGLHHLEYRAQDADVRGLTTLTPVSESSKVVVVESVM) the chain is on the cytoplasmic side. Phosphothreonine is present on residues Thr617 and Thr620. Ser623 is modified (phosphoserine).

Belongs to the sodium:neurotransmitter symporter (SNF) (TC 2.A.22) family. SLC6A8 subfamily. Post-translationally, glycosylated. As to expression, predominantly expressed in skeletal muscle and kidney. Also found in brain, heart, colon, testis and prostate.

It is found in the cell membrane. The protein localises to the apical cell membrane. The enzyme catalyses creatine(out) + chloride(out) + 2 Na(+)(out) = creatine(in) + chloride(in) + 2 Na(+)(in). In terms of biological role, creatine:sodium symporter which mediates the uptake of creatine. Plays an important role in supplying creatine to the brain via the blood-brain barrier. The sequence is that of Sodium- and chloride-dependent creatine transporter 1 (SLC6A8) from Homo sapiens (Human).